Here is a 233-residue protein sequence, read N- to C-terminus: Large ribosomal subunit protein uL1 (233 aa).

It belongs to the universal ribosomal protein uL1 family. Part of the 50S ribosomal subunit.

In terms of biological role, binds directly to 23S rRNA. The L1 stalk is quite mobile in the ribosome, and is involved in E site tRNA release. Protein L1 is also a translational repressor protein, it controls the translation of the L11 operon by binding to its mRNA. The chain is Large ribosomal subunit protein uL1 from Rhodospirillum rubrum (strain ATCC 11170 / ATH 1.1.1 / DSM 467 / LMG 4362 / NCIMB 8255 / S1).